The chain runs to 354 residues: Inactive ADP-ribosyltransferase ARH2 (354 aa).

Residue Ser27 is modified to Phosphoserine.

The protein belongs to the ADP-ribosylglycohydrolase family.

It localises to the cytoplasm. The protein resides in the myofibril. Its subcellular location is the sarcomere. Functionally, required for myofibril assembly and outgrowth of the cardiac chambers in the developing heart. Appears to be catalytically inactive, showing no activity against O-acetyl-ADP-ribose. In Bos taurus (Bovine), this protein is Inactive ADP-ribosyltransferase ARH2 (ADPRHL1).